The sequence spans 176 residues: Cytochrome b (176 aa).

The next 3 helical transmembrane spans lie at Phe33 to Met53, Trp77 to Val98, and Trp113 to Leu133. Heme b contacts are provided by His83 and His97.

This sequence belongs to the cytochrome b family. The cytochrome bc1 complex contains 11 subunits: 3 respiratory subunits (MT-CYB, CYC1 and UQCRFS1), 2 core proteins (UQCRC1 and UQCRC2) and 6 low-molecular weight proteins (UQCRH/QCR6, UQCRB/QCR7, UQCRQ/QCR8, UQCR10/QCR9, UQCR11/QCR10 and a cleavage product of UQCRFS1). This cytochrome bc1 complex then forms a dimer. Requires heme b as cofactor.

The protein resides in the mitochondrion inner membrane. Its function is as follows. Component of the ubiquinol-cytochrome c reductase complex (complex III or cytochrome b-c1 complex) that is part of the mitochondrial respiratory chain. The b-c1 complex mediates electron transfer from ubiquinol to cytochrome c. Contributes to the generation of a proton gradient across the mitochondrial membrane that is then used for ATP synthesis. The sequence is that of Cytochrome b (MT-CYB) from Mormopterus kalinowskii (Kalinowski's mastiff bat).